Reading from the N-terminus, the 92-residue chain is Small ribosomal subunit protein uS19c (92 aa).

It belongs to the universal ribosomal protein uS19 family.

Its subcellular location is the plastid. The protein resides in the chloroplast. Its function is as follows. Protein S19 forms a complex with S13 that binds strongly to the 16S ribosomal RNA. The sequence is that of Small ribosomal subunit protein uS19c from Amborella trichopoda.